Here is an 898-residue protein sequence, read N- to C-terminus: Phosphoenolpyruvate carboxylase (898 aa).

Residues His-138 and Lys-561 contribute to the active site.

Belongs to the PEPCase type 1 family. Requires Mg(2+) as cofactor.

It carries out the reaction oxaloacetate + phosphate = phosphoenolpyruvate + hydrogencarbonate. Its function is as follows. Forms oxaloacetate, a four-carbon dicarboxylic acid source for the tricarboxylic acid cycle. The protein is Phosphoenolpyruvate carboxylase of Streptococcus pneumoniae serotype 2 (strain D39 / NCTC 7466).